We begin with the raw amino-acid sequence, 124 residues long: Fluoride-specific ion channel FluC 2 (124 aa).

4 consecutive transmembrane segments (helical) span residues 8–28, 34–54, 60–80, and 93–113; these read LPNQWNEMWLVAFGAVPGALV, NDLLVNVIGAAILGLVVGLPF, LLLGVGFCGSLTTFSSWMVEC, and LGLIGLTMGLGLGVAALGFLI. Na(+) is bound by residues Gly68 and Thr71.

It belongs to the fluoride channel Fluc/FEX (TC 1.A.43) family.

Its subcellular location is the cell inner membrane. It carries out the reaction fluoride(in) = fluoride(out). Its activity is regulated as follows. Na(+) is not transported, but it plays an essential structural role and its presence is essential for fluoride channel function. In terms of biological role, fluoride-specific ion channel. Important for reducing fluoride concentration in the cell, thus reducing its toxicity. The chain is Fluoride-specific ion channel FluC 2 from Prochlorococcus marinus (strain MIT 9313).